A 286-amino-acid polypeptide reads, in one-letter code: ATP synthase gamma chain (286 aa).

The protein belongs to the ATPase gamma chain family. In terms of assembly, F-type ATPases have 2 components, CF(1) - the catalytic core - and CF(0) - the membrane proton channel. CF(1) has five subunits: alpha(3), beta(3), gamma(1), delta(1), epsilon(1). CF(0) has three main subunits: a, b and c.

The protein localises to the cell inner membrane. Functionally, produces ATP from ADP in the presence of a proton gradient across the membrane. The gamma chain is believed to be important in regulating ATPase activity and the flow of protons through the CF(0) complex. This chain is ATP synthase gamma chain, found in Pseudoalteromonas atlantica (strain T6c / ATCC BAA-1087).